Here is a 490-residue protein sequence, read N- to C-terminus: MSQLKNGSSQCLWTSICIVLIVMSMAREAVSTNYAEALKNSLLYFEAQRSGKLPPNQRVTWRGDSALRDGSDAHIDLTGGYYDAGDNMKFGFPLAFTTTMLAWSNIEMASQLRAHHEKGNALRALKWATDYLIKAHPQPNVLYGQVGEGNSDHKCWMRPEDMTTPRTSYRIDAQHPGSDLAGETAAAMAAASIAFAPSDKAYANILIGHAKDLFAFAKAHRGLYQNSIPNAGGFYASSGYEDELLWAAAWLHRATNDQIYLDYLTEAETGGPRTVFAWDDKFVGAQVLVAKLALEGKVESSEQIVEYKSMAEQFICNCAQKGDNNVKKTPGGLLYFLPWNNLQYTTAATFVLSAYSKYLEAAKASIDCPDGALQASDLLQVARSQVDYILGSNPQKMSYMVGVGTNYPKKPHHRAASIVSIRQDKTPVTCSGGYDKWYNNPAPNPNVLAGAVVGGPDDNDVYGDERSNFQQAEPATVTTAPLVGVLALVF.

A signal peptide spans 1–26 (MSQLKNGSSQCLWTSICIVLIVMSMA). A glycan (N-linked (GlcNAc...) asparagine) is linked at Asn-6. Asp-86 acts as the Nucleophile in catalysis. Active-site residues include His-412, Asp-464, and Glu-473.

Belongs to the glycosyl hydrolase 9 (cellulase E) family.

It is found in the secreted. The catalysed reaction is Endohydrolysis of (1-&gt;4)-beta-D-glucosidic linkages in cellulose, lichenin and cereal beta-D-glucans.. The chain is Endoglucanase 13 from Arabidopsis thaliana (Mouse-ear cress).